The primary structure comprises 465 residues: MEKLDESKFEQRLQLWALRIPRELSSAVTRLLRSGYLLDKPRVKTVVEDPEGDKNRLVILSEKIQKPDLSDMPQQELDSLKQLCNVDVVPYTLTLGYSYWSAGHVAHLNISDDLLPYKNVIAKVIYDKNYPRIQTVANKVGTITNEFRVPKFEILAGKNDMVTEVKQYGATFKLDYGLVYWNSRLDHEHIRLVSLFKKGDVICDMFAGIGPFAIPAAQKGCVVYANDLNPDSVHYLRTNAKINKVDDYIFAYNMDARVFMQNLMTVPGLETGSDCQVAADESYPKEGVPANENSSSNGNHNDVREGSQNGANESSVASTTAKKRQQTSEECESDCQDGDASQTKRRNNKRVRGPGPPPSKPWEHFDHVLMNLPASALQFLDCFDGLVQKKYWTGSLPWIHCYCFIRSSESEESILSNKLNAKIAEPIFHRVRDVAPNKAMFCLSFKLPMECLREDDSENHIESVA.

S-adenosyl-L-methionine-binding positions include His-189, 227–228, and 255–256; these read DL and DA. Positions 283-362 are disordered; sequence YPKEGVPANE…GPGPPPSKPW (80 aa). The span at 291–320 shows a compositional bias: polar residues; the sequence is NENSSSNGNHNDVREGSQNGANESSVASTT. Basic residues predominate over residues 343–352; the sequence is TKRRNNKRVR. Asn-371 provides a ligand contact to S-adenosyl-L-methionine.

This sequence belongs to the class I-like SAM-binding methyltransferase superfamily. TRM5/TYW2 family. Monomer.

It is found in the mitochondrion matrix. The protein resides in the nucleus. Its subcellular location is the cytoplasm. The enzyme catalyses guanosine(37) in tRNA + S-adenosyl-L-methionine = N(1)-methylguanosine(37) in tRNA + S-adenosyl-L-homocysteine + H(+). Functionally, specifically methylates the N1 position of guanosine-37 in various cytoplasmic and mitochondrial tRNAs. Methylation is not dependent on the nature of the nucleoside 5' of the target nucleoside. This is the first step in the biosynthesis of wybutosine (yW), a modified base adjacent to the anticodon of tRNAs and required for accurate decoding. The chain is tRNA (guanine(37)-N(1))-methyltransferase from Sorghum bicolor (Sorghum).